The primary structure comprises 142 residues: Cytochrome c-type biogenesis protein CcmE (142 aa).

Residues 1 to 2 (MK) lie on the Cytoplasmic side of the membrane. A helical; Signal-anchor for type II membrane protein membrane pass occupies residues 3-23 (GKYLLGILVILGALGYMVFGG). Over 24–142 (LGRNLVYFLT…EVRKLIEEAQ (119 aa)) the chain is Periplasmic. Residues H118 and Y122 each coordinate heme.

Belongs to the CcmE/CycJ family.

It is found in the cell inner membrane. Heme chaperone required for the biogenesis of c-type cytochromes. Transiently binds heme delivered by CcmC and transfers the heme to apo-cytochromes in a process facilitated by CcmF and CcmH. This is Cytochrome c-type biogenesis protein CcmE from Thermus thermophilus (strain ATCC 27634 / DSM 579 / HB8).